A 638-amino-acid polypeptide reads, in one-letter code: LIM domain kinase 2 (638 aa).

LIM zinc-binding domains follow at residues 12-63 (CRGC…CHKD) and 72-124 (CHGC…CGKC). A PDZ domain is found at 152-239 (LISMPATTEC…TLQLLIEHDP (88 aa)). T210 is modified (phosphothreonine). The segment covering 257 to 266 (MQSSGHTLML) has biased composition (polar residues). The interval 257 to 304 (MQSSGHTLMLSTLDAKENQEGTLRRRSLRRSNSISKSPGPSSPKEPLL) is disordered. Residues 270-279 (DAKENQEGTL) are compositionally biased toward basic and acidic residues. Low complexity predominate over residues 286–304 (RSNSISKSPGPSSPKEPLL). Residues S293 and S298 each carry the phosphoserine modification. The region spanning 331 to 608 (LIHGEVLGKG…DSFEALSLFL (278 aa)) is the Protein kinase domain. Residues 337 to 345 (LGKGFFGQA) and K360 contribute to the ATP site. Residue D451 is part of the active site. Residue T505 is modified to Phosphothreonine; by ROCK1 and CDC42BP.

The protein belongs to the protein kinase superfamily. TKL Ser/Thr protein kinase family. Binds ROCK1 and MARF1. Interacts with NISCH. Phosphorylated on serine and/or threonine residues by ROCK1. In terms of tissue distribution, found in various tissues at moderate levels, except for testis, which shows very low expression.

The protein resides in the cytoplasm. It is found in the nucleus. Its subcellular location is the perinuclear region. It localises to the cytoskeleton. The protein localises to the spindle. The protein resides in the microtubule organizing center. It is found in the centrosome. The catalysed reaction is L-seryl-[protein] + ATP = O-phospho-L-seryl-[protein] + ADP + H(+). The enzyme catalyses L-threonyl-[protein] + ATP = O-phospho-L-threonyl-[protein] + ADP + H(+). Its function is as follows. Serine/threonine-protein kinase that plays an essential role in the regulation of actin filament dynamics. Acts downstream of several Rho family GTPase signal transduction pathways. Involved in astral microtubule organization and mitotic spindle orientation during early stages of mitosis by mediating phosphorylation of TPPP. Displays serine/threonine-specific phosphorylation of myelin basic protein and histone (MBP) in vitro. Suppresses ciliogenesis via multiple pathways; phosphorylation of CFL1, directional trafficking of ciliary vesicles to the ciliary base, and by facilitating YAP1 nuclear localization where it acts as a transcriptional corepressor of the TEAD4 target genes AURKA and PLK1. This chain is LIM domain kinase 2 (Limk2), found in Rattus norvegicus (Rat).